Consider the following 471-residue polypeptide: T-box transcription factor T (471 aa).

The segment at residues 24–196 (LWTKFCSLTN…HNPFAKAFLD (173 aa)) is a DNA-binding region (T-box).

In terms of tissue distribution, developing notochord.

It is found in the nucleus. Involved in the transcriptional regulation of genes required for mesoderm differentiation. In Halocynthia roretzi (Sea squirt), this protein is T-box transcription factor T.